We begin with the raw amino-acid sequence, 440 residues long: Damage-control phosphatase ARMT1 (440 aa).

Mn(2+)-binding residues include Asp-252 and Asn-253. 252-253 (DN) is a binding site for substrate. Glu-257 and Asp-290 together coordinate S-adenosyl-L-methionine. Asp-290 contributes to the Mn(2+) binding site. Substrate-binding positions include 366-370 (DLNYR) and Lys-403. The Subfamily III RTxK motif motif lies at 400–403 (RTLK).

The protein belongs to the damage-control phosphatase family. Sugar phosphate phosphatase III subfamily. Mn(2+) is required as a cofactor. Ni(2+) serves as cofactor. In terms of processing, automethylated.

It carries out the reaction beta-D-fructose 1-phosphate + H2O = D-fructose + phosphate. The enzyme catalyses beta-D-fructose 6-phosphate = dihydroxyacetone + D-glyceraldehyde 3-phosphate. The catalysed reaction is L-glutamyl-[protein] + S-adenosyl-L-methionine = [protein]-L-glutamate 5-O-methyl ester + S-adenosyl-L-homocysteine. Metal-dependent phosphatase that shows phosphatase activity against several substrates, including fructose-1-phosphate and fructose-6-phosphate. Its preference for fructose-1-phosphate, a strong glycating agent that causes DNA damage rather than a canonical yeast metabolite, suggests a damage-control function in hexose phosphate metabolism. Has also been shown to have O-methyltransferase activity that methylates glutamate residues of target proteins to form gamma-glutamyl methyl ester residues. Possibly methylates PCNA, suggesting it is involved in the DNA damage response. In Xenopus laevis (African clawed frog), this protein is Damage-control phosphatase ARMT1.